Consider the following 233-residue polypeptide: Protein FAM204A (233 aa).

Residues 1–126 (MWSGLLPPGL…HSEPSSNETQ (126 aa)) form a disordered region. The segment covering 13–24 (SDAESNSEDEAT) has biased composition (acidic residues). The span at 39-58 (ESIRKTEIIDFSTDEPKTET) shows a compositional bias: basic and acidic residues. The segment covering 97–109 (FRGKRRKRSRKDK) has biased composition (basic residues). Positions 144 to 164 (VKRKKVEKSGLEKRIDQAVEE) form a coiled coil.

The protein is Protein FAM204A (FAM204A) of Homo sapiens (Human).